The chain runs to 932 residues: Protocadherin gamma-A9 (932 aa).

The signal sequence occupies residues 1 to 28; sequence MAAPTKCQLRGRLVLLCSLLGMLWEARA. Cadherin domains are found at residues 29 to 133, 134 to 242, 243 to 347, 348 to 452, 453 to 562, and 570 to 683; these read SQIR…APKF, QAES…APVF, AQRI…RPEV, TITS…PPAF, SQAS…APEI, and DGST…IPAD. The Extracellular portion of the chain corresponds to 29 to 692; it reads SQIRYSVPEE…DLEASDLTLY (664 aa). N-linked (GlcNAc...) asparagine glycosylation is found at Asn-47 and Asn-127. Residues Asn-389, Asn-419, and Asn-545 are each glycosylated (N-linked (GlcNAc...) asparagine). Residues 693–713 form a helical membrane-spanning segment; sequence LVVAVAVVSCVFLTFVITLLA. Over 714-932 the chain is Cytoplasmic; it reads LRLRHWHSSH…KKKSGKKEKK (219 aa). Disordered regions lie at residues 803-841 and 902-932; these read DTPL…WPNN and ATLT…KEKK. The span at 816–841 shows a compositional bias: polar residues; the sequence is WRFSQAQRPGTSGSQNGDDTGTWPNN. The segment covering 922–932 has biased composition (basic residues); it reads NKKKSGKKEKK.

Its subcellular location is the cell membrane. Potential calcium-dependent cell-adhesion protein. May be involved in the establishment and maintenance of specific neuronal connections in the brain. The chain is Protocadherin gamma-A9 (PCDHGA9) from Pan troglodytes (Chimpanzee).